Consider the following 900-residue polypeptide: Alanine--tRNA ligase (900 aa).

His-604, His-608, Cys-708, and His-712 together coordinate Zn(2+).

Belongs to the class-II aminoacyl-tRNA synthetase family. The cofactor is Zn(2+).

The protein localises to the cytoplasm. The enzyme catalyses tRNA(Ala) + L-alanine + ATP = L-alanyl-tRNA(Ala) + AMP + diphosphate. Catalyzes the attachment of alanine to tRNA(Ala) in a two-step reaction: alanine is first activated by ATP to form Ala-AMP and then transferred to the acceptor end of tRNA(Ala). Also edits incorrectly charged Ser-tRNA(Ala) and Gly-tRNA(Ala) via its editing domain. The protein is Alanine--tRNA ligase of Saccharolobus islandicus (strain Y.G.57.14 / Yellowstone #1) (Sulfolobus islandicus).